Reading from the N-terminus, the 183-residue chain is MFKQLRPALASLLVLSLVTGVAYPLLVTGIAQLAFPEQANGSLLRDAEGKVLGSRLIAQKFDGEEWFHSRPSAGDYATVSSAASNLAPSNPALAERIARDAAQERIADQGPVPLALVTTSGSGLDPQLPPQAARYQALRVATARGLPLRLVEDLVESHTERPLVGPAVVNVLALNMALTGLKR.

Residues 10-30 (ASLLVLSLVTGVAYPLLVTGI) form a helical membrane-spanning segment.

The protein belongs to the KdpC family. In terms of assembly, the system is composed of three essential subunits: KdpA, KdpB and KdpC.

The protein localises to the cell inner membrane. Functionally, part of the high-affinity ATP-driven potassium transport (or Kdp) system, which catalyzes the hydrolysis of ATP coupled with the electrogenic transport of potassium into the cytoplasm. This subunit acts as a catalytic chaperone that increases the ATP-binding affinity of the ATP-hydrolyzing subunit KdpB by the formation of a transient KdpB/KdpC/ATP ternary complex. This Pseudomonas aeruginosa (strain UCBPP-PA14) protein is Potassium-transporting ATPase KdpC subunit.